A 197-amino-acid polypeptide reads, in one-letter code: 3-isopropylmalate dehydratase small subunit (197 aa).

This sequence belongs to the LeuD family. LeuD type 1 subfamily. In terms of assembly, heterodimer of LeuC and LeuD.

The catalysed reaction is (2R,3S)-3-isopropylmalate = (2S)-2-isopropylmalate. Its pathway is amino-acid biosynthesis; L-leucine biosynthesis; L-leucine from 3-methyl-2-oxobutanoate: step 2/4. In terms of biological role, catalyzes the isomerization between 2-isopropylmalate and 3-isopropylmalate, via the formation of 2-isopropylmaleate. The chain is 3-isopropylmalate dehydratase small subunit from Streptomyces avermitilis (strain ATCC 31267 / DSM 46492 / JCM 5070 / NBRC 14893 / NCIMB 12804 / NRRL 8165 / MA-4680).